Here is a 195-residue protein sequence, read N- to C-terminus: Peptidyl-tRNA hydrolase (195 aa).

TRNA is bound at residue Tyr14. The Proton acceptor role is filled by His19. Positions 64 and 66 each coordinate tRNA.

The protein belongs to the PTH family. As to quaternary structure, monomer.

The protein resides in the cytoplasm. It catalyses the reaction an N-acyl-L-alpha-aminoacyl-tRNA + H2O = an N-acyl-L-amino acid + a tRNA + H(+). In terms of biological role, hydrolyzes ribosome-free peptidyl-tRNAs (with 1 or more amino acids incorporated), which drop off the ribosome during protein synthesis, or as a result of ribosome stalling. Functionally, catalyzes the release of premature peptidyl moieties from peptidyl-tRNA molecules trapped in stalled 50S ribosomal subunits, and thus maintains levels of free tRNAs and 50S ribosomes. This chain is Peptidyl-tRNA hydrolase, found in Desulforudis audaxviator (strain MP104C).